We begin with the raw amino-acid sequence, 189 residues long: Large ribosomal subunit protein eL18 (189 aa).

This sequence belongs to the eukaryotic ribosomal protein eL18 family.

It is found in the cytoplasm. This is Large ribosomal subunit protein eL18 (RpL18) from Anopheles gambiae (African malaria mosquito).